A 74-amino-acid polypeptide reads, in one-letter code: Toxin BmKaTx17 (74 aa).

The N-terminal stretch at 1-8 (LLMTGVES) is a signal peptide. One can recognise an LCN-type CS-alpha/beta domain in the interval 10-72 (RDAYIAKNYN…KPIRIPGKCH (63 aa)). Intrachain disulfides connect Cys20–Cys71, Cys24–Cys44, Cys30–Cys54, and Cys34–Cys56. The propeptide at 73–74 (RR) is removed by a carboxypeptidase.

Belongs to the long (4 C-C) scorpion toxin superfamily. Sodium channel inhibitor family. Alpha subfamily. Expressed by the venom gland.

It localises to the secreted. Functionally, alpha toxins bind voltage-independently at site-3 of sodium channels (Nav) and inhibit the inactivation of the activated channels, thereby blocking neuronal transmission. The chain is Toxin BmKaTx17 from Olivierus martensii (Manchurian scorpion).